A 146-amino-acid chain; its full sequence is Ubiquitin-conjugating enzyme E2 variant 1D (146 aa).

The UBC core domain occupies 13 to 146; sequence PRNFRLLEEL…LVQPPEGTCF (134 aa).

The protein belongs to the ubiquitin-conjugating enzyme family. As to quaternary structure, heterodimer with UBC35 or UBC36. Expressed in roots, shoots, leaves, stems, flowers and pollen.

Functionally, has no ubiquitin ligase activity on its own. The heterodimer with UBC catalyzes the synthesis of non-canonical poly-ubiquitin chains that are linked through 'Lys-63'. This type of poly-ubiquitination does not lead to protein degradation by the proteasome. Mediates transcriptional activation of target genes. May play a role in the control of progress through the cell cycle and differentiation. Involved in the error-free DNA repair pathway and contributes to the survival of cells after DNA damage. The sequence is that of Ubiquitin-conjugating enzyme E2 variant 1D (UEV1D) from Arabidopsis thaliana (Mouse-ear cress).